A 246-amino-acid polypeptide reads, in one-letter code: Probable transcriptional regulatory protein GWCH70_2524 (246 aa).

This sequence belongs to the TACO1 family.

It localises to the cytoplasm. This is Probable transcriptional regulatory protein GWCH70_2524 from Geobacillus sp. (strain WCH70).